We begin with the raw amino-acid sequence, 507 residues long: ATP synthase subunit alpha, chloroplastic (507 aa).

170-177 (GDRQTGKT) lines the ATP pocket.

Belongs to the ATPase alpha/beta chains family. As to quaternary structure, F-type ATPases have 2 components, CF(1) - the catalytic core - and CF(0) - the membrane proton channel. CF(1) has five subunits: alpha(3), beta(3), gamma(1), delta(1), epsilon(1). CF(0) has four main subunits: a, b, b' and c.

The protein localises to the plastid. The protein resides in the chloroplast thylakoid membrane. It catalyses the reaction ATP + H2O + 4 H(+)(in) = ADP + phosphate + 5 H(+)(out). Its function is as follows. Produces ATP from ADP in the presence of a proton gradient across the membrane. The alpha chain is a regulatory subunit. In Gossypium hirsutum (Upland cotton), this protein is ATP synthase subunit alpha, chloroplastic.